A 56-amino-acid polypeptide reads, in one-letter code: UPF0434 protein WIGBR2520 (56 aa).

Belongs to the UPF0434 family.

This chain is UPF0434 protein WIGBR2520, found in Wigglesworthia glossinidia brevipalpis.